The following is a 350-amino-acid chain: MSHQTGIQASEDVKDIFARARNGKYRLLKISIENEKLVIGSCRKPSDSWDQDYDSFVLPLLEDKQPCYVLFRLDSQNAQGYEWIFIAWSPDHSHVRQKMLYAATRATLKKEFGGGHIKDEMFGTVKEDVSLHGYKKYLLSQSSPAPLTAAEEELRQIKINEVQTDVSVDAKHQTLQGVAFPISQEAFQALEKLNNRQLNYVQLEIDIKNEIIILANTINTELKDLPKRIPKDAARYHFFLYKHSHEGDYLESIVFIYSMPGYTCSIRERMLYSSCKSPLLEIVERQLQMDIIRKIEIDNGDELTADFLYEEVHPKQHAHKQSFAKPKGPSGKRGIRRIIRGPAETEATTE.

At serine 2 the chain carries N-acetylserine. An ADF-H 1 domain is found at 2 to 139 (SHQTGIQASE…SLHGYKKYLL (138 aa)). Phosphoserine occurs at positions 143 and 277. The ADF-H 2 domain maps to 177–313 (GVAFPISQEA…TADFLYEEVH (137 aa)). The residue at position 309 (tyrosine 309) is a Phosphotyrosine. The tract at residues 316–350 (QHAHKQSFAKPKGPSGKRGIRRIIRGPAETEATTE) is disordered. Threonine 349 carries the post-translational modification Phosphothreonine.

This sequence belongs to the actin-binding proteins ADF family. Twinfilin subfamily. As to quaternary structure, interacts with G-actin; ADP-actin form and capping protein (CP). May also be able to interact with TWF2 and phosphoinositides, PI(4,5)P2. When bound to PI(4,5)P2, it is down-regulated. Interacts with ACTG1. Phosphorylated on serine and threonine residues.

It localises to the cytoplasm. It is found in the cytoskeleton. Its function is as follows. Actin-binding protein involved in motile and morphological processes. Inhibits actin polymerization, likely by sequestering G-actin. By capping the barbed ends of filaments, it also regulates motility. Seems to play an important role in clathrin-mediated endocytosis and distribution of endocytic organelles. The chain is Twinfilin-1 (TWF1) from Bos taurus (Bovine).